The sequence spans 340 residues: Glyceraldehyde-3-phosphate dehydrogenase, cytosolic (340 aa).

NAD(+) is bound by residues 16–17, Asp38, and Arg85; that span reads RI. D-glyceraldehyde 3-phosphate is bound by residues 156-158, Thr187, 216-217, and Arg239; these read SCT and TG. Cys157 serves as the catalytic Nucleophile. Asn321 is a binding site for NAD(+).

Belongs to the glyceraldehyde-3-phosphate dehydrogenase family. Homotetramer.

It is found in the cytoplasm. The catalysed reaction is D-glyceraldehyde 3-phosphate + phosphate + NAD(+) = (2R)-3-phospho-glyceroyl phosphate + NADH + H(+). It participates in carbohydrate degradation; glycolysis; pyruvate from D-glyceraldehyde 3-phosphate: step 1/5. Functionally, key enzyme in glycolysis that catalyzes the first step of the pathway by converting D-glyceraldehyde 3-phosphate (G3P) into 3-phospho-D-glyceroyl phosphate. Essential for the maintenance of cellular ATP levels and carbohydrate metabolism. The polypeptide is Glyceraldehyde-3-phosphate dehydrogenase, cytosolic (Ginkgo biloba (Ginkgo)).